The sequence spans 320 residues: ATP-dependent 6-phosphofructokinase (320 aa).

Position 11 (Gly-11) interacts with ATP. Residue Arg-21–Arg-25 coordinates ADP. ATP contacts are provided by residues Arg-72 to Tyr-73 and Gly-102 to Ser-105. Position 103 (Asp-103) interacts with Mg(2+). A substrate-binding site is contributed by Thr-125–Asp-127. Asp-127 acts as the Proton acceptor in catalysis. Position 154 (Arg-154) interacts with ADP. Residues Arg-162 and Met-169–Arg-171 each bind substrate. Residues Gly-185 to Asp-187, Arg-211, and Lys-213 to His-215 contribute to the ADP site. Substrate contacts are provided by residues Glu-222, Arg-243, and His-249–Arg-252.

The protein belongs to the phosphofructokinase type A (PFKA) family. ATP-dependent PFK group I subfamily. Prokaryotic clade 'B1' sub-subfamily. Homotetramer. Mg(2+) serves as cofactor.

The protein localises to the cytoplasm. It carries out the reaction beta-D-fructose 6-phosphate + ATP = beta-D-fructose 1,6-bisphosphate + ADP + H(+). It functions in the pathway carbohydrate degradation; glycolysis; D-glyceraldehyde 3-phosphate and glycerone phosphate from D-glucose: step 3/4. Allosterically activated by ADP and other diphosphonucleosides, and allosterically inhibited by phosphoenolpyruvate. Functionally, catalyzes the phosphorylation of D-fructose 6-phosphate to fructose 1,6-bisphosphate by ATP, the first committing step of glycolysis. The polypeptide is ATP-dependent 6-phosphofructokinase (Enterococcus faecalis (strain ATCC 700802 / V583)).